We begin with the raw amino-acid sequence, 137 residues long: Large ribosomal subunit protein uL16 (137 aa).

This sequence belongs to the universal ribosomal protein uL16 family. In terms of assembly, part of the 50S ribosomal subunit.

Binds 23S rRNA and is also seen to make contacts with the A and possibly P site tRNAs. The chain is Large ribosomal subunit protein uL16 from Thioalkalivibrio sulfidiphilus (strain HL-EbGR7).